A 914-amino-acid chain; its full sequence is Probable dipeptidyl-aminopeptidase B (914 aa).

Residues 1–82 (MGAEKRINDE…GLPPPSGAQR (82 aa)) are disordered. Over 1–88 (MGAEKRINDE…GAQRTPKKVS (88 aa)) the chain is Cytoplasmic. The segment covering 26–38 (DSTSTASISLALI) has biased composition (low complexity). A helical; Signal-anchor for type II membrane protein membrane pass occupies residues 89-109 (IIFWLVAALCVGGWLVAFFVF). Topologically, residues 110–914 (MGSPKKDSDK…RSLLKRMSNA (805 aa)) are vacuolar. 4 N-linked (GlcNAc...) asparagine glycosylation sites follow: Asn-128, Asn-295, Asn-347, and Asn-617. Ser-751 serves as the catalytic Charge relay system. Asn-810 is a glycosylation site (N-linked (GlcNAc...) asparagine). Residues Asp-828 and His-861 each act as charge relay system in the active site. Asn-897 is a glycosylation site (N-linked (GlcNAc...) asparagine).

This sequence belongs to the peptidase S9B family.

It is found in the vacuole membrane. It catalyses the reaction Release of an N-terminal dipeptide, Xaa-Yaa-|-Zaa-, from a polypeptide, preferentially when Yaa is Pro, provided Zaa is neither Pro nor hydroxyproline.. In terms of biological role, type IV dipeptidyl-peptidase which removes N-terminal dipeptides sequentially from polypeptides having unsubstituted N-termini provided that the penultimate residue is proline. The sequence is that of Probable dipeptidyl-aminopeptidase B (DAPB) from Uncinocarpus reesii (strain UAMH 1704).